Consider the following 258-residue polypeptide: UDP-2,3-diacylglucosamine hydrolase (258 aa).

Residues Asp-15, His-17, Asp-48, Asn-88, and His-123 each contribute to the Mn(2+) site. A substrate-binding site is contributed by Asn-88 to Arg-89. Residues Asp-131, Ser-169, Asn-173, Lys-176, and His-204 each coordinate substrate. 2 residues coordinate Mn(2+): His-204 and His-206.

The protein belongs to the LpxH family. The cofactor is Mn(2+).

The protein localises to the cell inner membrane. It catalyses the reaction UDP-2-N,3-O-bis[(3R)-3-hydroxytetradecanoyl]-alpha-D-glucosamine + H2O = 2-N,3-O-bis[(3R)-3-hydroxytetradecanoyl]-alpha-D-glucosaminyl 1-phosphate + UMP + 2 H(+). It functions in the pathway glycolipid biosynthesis; lipid IV(A) biosynthesis; lipid IV(A) from (3R)-3-hydroxytetradecanoyl-[acyl-carrier-protein] and UDP-N-acetyl-alpha-D-glucosamine: step 4/6. Hydrolyzes the pyrophosphate bond of UDP-2,3-diacylglucosamine to yield 2,3-diacylglucosamine 1-phosphate (lipid X) and UMP by catalyzing the attack of water at the alpha-P atom. Involved in the biosynthesis of lipid A, a phosphorylated glycolipid that anchors the lipopolysaccharide to the outer membrane of the cell. This is UDP-2,3-diacylglucosamine hydrolase from Bordetella pertussis (strain Tohama I / ATCC BAA-589 / NCTC 13251).